The following is a 210-amino-acid chain: 7-carboxy-7-deazaguanine synthase (210 aa).

Substrate is bound by residues 12-14 (LQG) and Arg-27. Positions 18-210 (NAGRPAVFCR…MQTHKYLNIP (193 aa)) constitute a Radical SAM core domain. [4Fe-4S] cluster contacts are provided by Cys-31, Cys-46, and Cys-49. 48–50 (FCD) provides a ligand contact to S-adenosyl-L-methionine. Thr-51 provides a ligand contact to Mg(2+). A substrate-binding site is contributed by Thr-90. Residues Gly-92, 133–135 (SPK), and 173–176 (QPMD) each bind S-adenosyl-L-methionine. Pro-210 is a substrate binding site.

The protein belongs to the radical SAM superfamily. 7-carboxy-7-deazaguanine synthase family. Homodimer. The cofactor is [4Fe-4S] cluster. S-adenosyl-L-methionine is required as a cofactor. Requires Mg(2+) as cofactor.

It carries out the reaction 6-carboxy-5,6,7,8-tetrahydropterin + H(+) = 7-carboxy-7-deazaguanine + NH4(+). Its pathway is purine metabolism; 7-cyano-7-deazaguanine biosynthesis. Its function is as follows. Catalyzes the complex heterocyclic radical-mediated conversion of 6-carboxy-5,6,7,8-tetrahydropterin (CPH4) to 7-carboxy-7-deazaguanine (CDG), a step common to the biosynthetic pathways of all 7-deazapurine-containing compounds. This is 7-carboxy-7-deazaguanine synthase from Burkholderia multivorans (strain ATCC 17616 / 249).